Reading from the N-terminus, the 259-residue chain is Acyl-[acyl-carrier-protein]--UDP-N-acetylglucosamine O-acyltransferase (259 aa).

The protein belongs to the transferase hexapeptide repeat family. LpxA subfamily. Homotrimer.

It localises to the cytoplasm. It carries out the reaction a (3R)-hydroxyacyl-[ACP] + UDP-N-acetyl-alpha-D-glucosamine = a UDP-3-O-[(3R)-3-hydroxyacyl]-N-acetyl-alpha-D-glucosamine + holo-[ACP]. The protein operates within glycolipid biosynthesis; lipid IV(A) biosynthesis; lipid IV(A) from (3R)-3-hydroxytetradecanoyl-[acyl-carrier-protein] and UDP-N-acetyl-alpha-D-glucosamine: step 1/6. Its function is as follows. Involved in the biosynthesis of lipid A, a phosphorylated glycolipid that anchors the lipopolysaccharide to the outer membrane of the cell. This chain is Acyl-[acyl-carrier-protein]--UDP-N-acetylglucosamine O-acyltransferase, found in Akkermansia muciniphila (strain ATCC BAA-835 / DSM 22959 / JCM 33894 / BCRC 81048 / CCUG 64013 / CIP 107961 / Muc).